The sequence spans 297 residues: UDP-3-O-acyl-N-acetylglucosamine deacetylase (297 aa).

Residues His79, His238, and Asp242 each coordinate Zn(2+). Residue His265 is the Proton donor of the active site.

This sequence belongs to the LpxC family. The cofactor is Zn(2+).

It catalyses the reaction a UDP-3-O-[(3R)-3-hydroxyacyl]-N-acetyl-alpha-D-glucosamine + H2O = a UDP-3-O-[(3R)-3-hydroxyacyl]-alpha-D-glucosamine + acetate. It participates in glycolipid biosynthesis; lipid IV(A) biosynthesis; lipid IV(A) from (3R)-3-hydroxytetradecanoyl-[acyl-carrier-protein] and UDP-N-acetyl-alpha-D-glucosamine: step 2/6. Functionally, catalyzes the hydrolysis of UDP-3-O-myristoyl-N-acetylglucosamine to form UDP-3-O-myristoylglucosamine and acetate, the committed step in lipid A biosynthesis. The polypeptide is UDP-3-O-acyl-N-acetylglucosamine deacetylase (Blochmanniella pennsylvanica (strain BPEN)).